Here is a 397-residue protein sequence, read N- to C-terminus: Adenylosuccinate synthetase (397 aa).

GTP is bound by residues 11 to 17 (GDEGKGK) and 39 to 41 (GHT). Residue Asp-12 is the Proton acceptor of the active site. Positions 12 and 39 each coordinate Mg(2+). IMP-binding positions include 12–15 (DEGK), 37–40 (NAGH), Thr-125, Arg-139, Gln-212, Thr-227, and Arg-290. His-40 functions as the Proton donor in the catalytic mechanism. 286-292 (STTGRPR) provides a ligand contact to substrate. Residues Arg-292, 318–320 (KAD), and 386–388 (STG) contribute to the GTP site.

The protein belongs to the adenylosuccinate synthetase family. Homodimer. Mg(2+) is required as a cofactor.

The protein localises to the cytoplasm. It carries out the reaction IMP + L-aspartate + GTP = N(6)-(1,2-dicarboxyethyl)-AMP + GDP + phosphate + 2 H(+). The protein operates within purine metabolism; AMP biosynthesis via de novo pathway; AMP from IMP: step 1/2. In terms of biological role, plays an important role in the de novo pathway of purine nucleotide biosynthesis. Catalyzes the first committed step in the biosynthesis of AMP from IMP. This is Adenylosuccinate synthetase from Thermotoga maritima (strain ATCC 43589 / DSM 3109 / JCM 10099 / NBRC 100826 / MSB8).